Here is a 150-residue protein sequence, read N- to C-terminus: Large ribosomal subunit protein bL9 (150 aa).

It belongs to the bacterial ribosomal protein bL9 family.

In terms of biological role, binds to the 23S rRNA. The protein is Large ribosomal subunit protein bL9 of Yersinia enterocolitica serotype O:8 / biotype 1B (strain NCTC 13174 / 8081).